The chain runs to 741 residues: Polyribonucleotide nucleotidyltransferase (741 aa).

Positions 489 and 495 each coordinate Mg(2+). Residues 556–615 (PKIDSIQIPVDKIKVVIGKGGETIDKIIAETGVTIDIDEEGLVQIFSSDQDAIDRAKTII) enclose the KH domain. In terms of domain architecture, S1 motif spans 625 to 693 (GEVYTVPVVR…EKGRVDASIK (69 aa)). The tract at residues 696–741 (LPKPEKNEDGENGEEHRHCCCSHHKPDHHSESMEAPKKSDESETKE) is disordered. 2 stretches are compositionally biased toward basic and acidic residues: residues 698 to 713 (KPEKNEDGENGEEHRH) and 723 to 741 (HHSESMEAPKKSDESETKE).

This sequence belongs to the polyribonucleotide nucleotidyltransferase family. Requires Mg(2+) as cofactor.

The protein localises to the cytoplasm. The catalysed reaction is RNA(n+1) + phosphate = RNA(n) + a ribonucleoside 5'-diphosphate. Its function is as follows. Involved in mRNA degradation. Catalyzes the phosphorolysis of single-stranded polyribonucleotides processively in the 3'- to 5'-direction. The sequence is that of Polyribonucleotide nucleotidyltransferase from Streptococcus thermophilus (strain ATCC BAA-491 / LMD-9).